A 163-amino-acid polypeptide reads, in one-letter code: SsrA-binding protein (163 aa).

Over residues 135 to 156 the composition is skewed to basic and acidic residues; sequence GKKEHDKRDDTKEREWKIEKSR. A disordered region spans residues 135–163; it reads GKKEHDKRDDTKEREWKIEKSRTMKHAAR.

Belongs to the SmpB family.

The protein localises to the cytoplasm. In terms of biological role, required for rescue of stalled ribosomes mediated by trans-translation. Binds to transfer-messenger RNA (tmRNA), required for stable association of tmRNA with ribosomes. tmRNA and SmpB together mimic tRNA shape, replacing the anticodon stem-loop with SmpB. tmRNA is encoded by the ssrA gene; the 2 termini fold to resemble tRNA(Ala) and it encodes a 'tag peptide', a short internal open reading frame. During trans-translation Ala-aminoacylated tmRNA acts like a tRNA, entering the A-site of stalled ribosomes, displacing the stalled mRNA. The ribosome then switches to translate the ORF on the tmRNA; the nascent peptide is terminated with the 'tag peptide' encoded by the tmRNA and targeted for degradation. The ribosome is freed to recommence translation, which seems to be the essential function of trans-translation. This chain is SsrA-binding protein, found in Shewanella loihica (strain ATCC BAA-1088 / PV-4).